Here is a 334-residue protein sequence, read N- to C-terminus: GTP 3',8-cyclase (334 aa).

In terms of domain architecture, Radical SAM core spans 8-244; sequence RYGRPLRDLR…GEVAQRHAFA (237 aa). Arg17 lines the GTP pocket. The [4Fe-4S] cluster site is built by Cys24 and Cys28. Residue Tyr30 participates in S-adenosyl-L-methionine binding. Cys31 is a [4Fe-4S] cluster binding site. A GTP-binding site is contributed by Arg70. Residue Gly74 participates in S-adenosyl-L-methionine binding. Thr101 provides a ligand contact to GTP. An S-adenosyl-L-methionine-binding site is contributed by Ser125. Lys163 contributes to the GTP binding site. Residue Met197 coordinates S-adenosyl-L-methionine. Residues Cys261 and Cys264 each contribute to the [4Fe-4S] cluster site. Residue 266-268 coordinates GTP; it reads RAR. Cys278 lines the [4Fe-4S] cluster pocket.

The protein belongs to the radical SAM superfamily. MoaA family. As to quaternary structure, monomer and homodimer. [4Fe-4S] cluster serves as cofactor.

It catalyses the reaction GTP + AH2 + S-adenosyl-L-methionine = (8S)-3',8-cyclo-7,8-dihydroguanosine 5'-triphosphate + 5'-deoxyadenosine + L-methionine + A + H(+). It participates in cofactor biosynthesis; molybdopterin biosynthesis. In terms of biological role, catalyzes the cyclization of GTP to (8S)-3',8-cyclo-7,8-dihydroguanosine 5'-triphosphate. The polypeptide is GTP 3',8-cyclase (Xanthomonas axonopodis pv. citri (strain 306)).